A 267-amino-acid polypeptide reads, in one-letter code: Imidazole glycerol phosphate synthase subunit HisF (267 aa).

Residues D21 and D140 contribute to the active site.

It belongs to the HisA/HisF family. In terms of assembly, heterodimer of HisH and HisF.

The protein resides in the cytoplasm. It carries out the reaction 5-[(5-phospho-1-deoxy-D-ribulos-1-ylimino)methylamino]-1-(5-phospho-beta-D-ribosyl)imidazole-4-carboxamide + L-glutamine = D-erythro-1-(imidazol-4-yl)glycerol 3-phosphate + 5-amino-1-(5-phospho-beta-D-ribosyl)imidazole-4-carboxamide + L-glutamate + H(+). It functions in the pathway amino-acid biosynthesis; L-histidine biosynthesis; L-histidine from 5-phospho-alpha-D-ribose 1-diphosphate: step 5/9. IGPS catalyzes the conversion of PRFAR and glutamine to IGP, AICAR and glutamate. The HisF subunit catalyzes the cyclization activity that produces IGP and AICAR from PRFAR using the ammonia provided by the HisH subunit. In Bordetella avium (strain 197N), this protein is Imidazole glycerol phosphate synthase subunit HisF.